The sequence spans 346 residues: GTPase Obg (346 aa).

Residues 1-159 form the Obg domain; the sequence is MQFVDEANIR…RNLGLELSVL (159 aa). The disordered stretch occupies residues 127–149; that stretch reads NVHFKSSTNRTPRQCTPGEPGDE. A compositionally biased stretch (polar residues) spans 130 to 140; the sequence is FKSSTNRTPRQ. One can recognise an OBG-type G domain in the interval 160–333; it reads ADVGLLGMPN…LVKEVAYGLE (174 aa). GTP is bound by residues 166-173, 191-195, 213-216, 283-286, and 314-316; these read GMPNAGKS, FTTLY, DIPG, NKTD, and SAV. Mg(2+) is bound by residues Ser-173 and Thr-193.

This sequence belongs to the TRAFAC class OBG-HflX-like GTPase superfamily. OBG GTPase family. In terms of assembly, monomer. The cofactor is Mg(2+).

Its subcellular location is the cytoplasm. Its function is as follows. An essential GTPase which binds GTP, GDP and possibly (p)ppGpp with moderate affinity, with high nucleotide exchange rates and a fairly low GTP hydrolysis rate. Plays a role in control of the cell cycle, stress response, ribosome biogenesis and in those bacteria that undergo differentiation, in morphogenesis control. This chain is GTPase Obg, found in Hydrogenovibrio crunogenus (strain DSM 25203 / XCL-2) (Thiomicrospira crunogena).